We begin with the raw amino-acid sequence, 419 residues long: Aminoacyltransferase FemB (419 aa).

It belongs to the FemABX family. In terms of assembly, homodimer. Interacts with FemA.

It localises to the cytoplasm. The catalysed reaction is MurNAc-L-Ala-D-isoglutaminyl-L-Lys-(N(6)-tri-Gly)-D-Ala-D-Ala-diphospho-di-trans,octa-cis-undecaprenyl-GlcNAc + 2 glycyl-tRNA(Gly) = MurNAc-L-Ala-D-isoglutaminyl-L-Lys-(N(6)-penta-Gly)-D-Ala-D-Ala-diphospho-di-trans,octa-cis-undecaprenyl-GlcNAc + 2 tRNA(Gly) + 2 H(+). Its function is as follows. Catalyzes the formation of the pentaglycine interpeptide bridge, which is characteristic of the S.aureus peptidoglycan. Adds glycines 4 and 5 of the pentaglycine bridge, using glycyl-tRNA(Gly) as donor. Involved in resistance to methicillin. This is Aminoacyltransferase FemB (femB) from Staphylococcus aureus (strain MW2).